Consider the following 277-residue polypeptide: Large ribosomal subunit protein uL2m (277 aa).

Positions 225-263 (AMNPVDHPHGGGEGKTSGGRPSVTPWSWPTKGQPTRSKR) are disordered. The span at 248-259 (TPWSWPTKGQPT) shows a compositional bias: polar residues.

Belongs to the universal ribosomal protein uL2 family.

It is found in the mitochondrion. This Reclinomonas americana protein is Large ribosomal subunit protein uL2m (RPL2).